A 411-amino-acid chain; its full sequence is Citrate synthase (411 aa).

Residues histidine 304 and aspartate 363 contribute to the active site.

Belongs to the citrate synthase family.

The catalysed reaction is oxaloacetate + acetyl-CoA + H2O = citrate + CoA + H(+). The protein operates within carbohydrate metabolism; tricarboxylic acid cycle; isocitrate from oxaloacetate: step 1/2. The polypeptide is Citrate synthase (gltA) (Rickettsia akari).